Here is a 589-residue protein sequence, read N- to C-terminus: Transcription factor MYC4 (589 aa).

The JAZ-interaction domain stretch occupies residues 99–150; the sequence is NTVLLGWGDGYYKGEEEKSRKKKSNPASAAEQEHRKRVIRELNSLISGGVGG. 4 disordered regions span residues 114-133, 291-326, 340-359, and 381-422; these read EEKS…QEHR, AAPV…PNPK, IENG…VSNN, and ASVA…EAER. Low complexity predominate over residues 296–308; sequence NNGGNDSTSNSDS. Residues 309-322 are compositionally biased toward polar residues; sequence QPISKLCNGSSVEN. The span at 381–398 shows a compositional bias: basic and acidic residues; the sequence is ASVAKEAESNRVVVEPEK. Residues 399 to 408 show a composition bias toward basic residues; that stretch reads KPRKRGRKPA. Basic and acidic residues predominate over residues 409 to 422; that stretch reads NGREEPLNHVEAER. One can recognise a bHLH domain in the interval 412 to 461; it reads EEPLNHVEAERQRREKLNQRFYSLRAVVPNVSKMDKASLLGDAISYISEL.

In terms of assembly, homo- and heterodimer. Interacts with MYB28, MYB29, MYB34, MYB51, MYB76, MYB122, MYC3, AFPH2/NINJA and the JAZ repressors TIFY10A/JAZ1, TIFY10B/JAZ2, TIFY6B/JAZ3, TIFY6A/JAZ4, TIFY11A/JAZ5, TIFY11B/JAZ6, TIFY5B/JAZ7, TIFY5A/JAZ8, TIFY7/JAZ9, TIFY9/JAZ10, TIFY3A/JAZ11 and TIFY3B/JAZ12. Expressed constitutively at low levels. Preferentially expressed in vascular tissues.

It localises to the nucleus. Its function is as follows. Transcription factor involved in jasmonic acid (JA) gene regulation. With MYC2 and MYC3, controls additively subsets of JA-dependent responses. Can form complexes with all known glucosinolate-related MYBs to regulate glucosinolate biosynthesis. Binds to the G-box (5'-CACGTG-3') of promoters. Activates multiple TIFY/JAZ promoters. This is Transcription factor MYC4 (MYC4) from Arabidopsis thaliana (Mouse-ear cress).